The sequence spans 544 residues: Chaperonin GroEL (544 aa).

ATP is bound by residues 30-33 (TLGP), K51, 87-91 (DGTTT), G415, and D495.

It belongs to the chaperonin (HSP60) family. In terms of assembly, forms a cylinder of 14 subunits composed of two heptameric rings stacked back-to-back. Interacts with the co-chaperonin GroES.

Its subcellular location is the cytoplasm. The enzyme catalyses ATP + H2O + a folded polypeptide = ADP + phosphate + an unfolded polypeptide.. In terms of biological role, together with its co-chaperonin GroES, plays an essential role in assisting protein folding. The GroEL-GroES system forms a nano-cage that allows encapsulation of the non-native substrate proteins and provides a physical environment optimized to promote and accelerate protein folding. The protein is Chaperonin GroEL of Bartonella bacilliformis.